A 210-amino-acid polypeptide reads, in one-letter code: Protein-methionine-sulfoxide reductase heme-binding subunit MsrQ (210 aa).

A run of 4 helical transmembrane segments spans residues 15 to 35 (DTLVYGLVWLACFAPLAWLAW), 89 to 109 (LFAFAYVALHLLAYVGIDLFF), 122 to 142 (PFITLGMLGFMLLIPLAVTST), and 160 to 180 (LVYLIVPLGVAHYYLLVKADH).

Belongs to the MsrQ family. As to quaternary structure, heterodimer of a catalytic subunit (MsrP) and a heme-binding subunit (MsrQ). FMN serves as cofactor. Heme b is required as a cofactor.

It localises to the cell inner membrane. Part of the MsrPQ system that repairs oxidized periplasmic proteins containing methionine sulfoxide residues (Met-O), using respiratory chain electrons. Thus protects these proteins from oxidative-stress damage caused by reactive species of oxygen and chlorine generated by the host defense mechanisms. MsrPQ is essential for the maintenance of envelope integrity under bleach stress, rescuing a wide series of structurally unrelated periplasmic proteins from methionine oxidation. MsrQ provides electrons for reduction to the reductase catalytic subunit MsrP, using the quinone pool of the respiratory chain. In Caulobacter vibrioides (strain ATCC 19089 / CIP 103742 / CB 15) (Caulobacter crescentus), this protein is Protein-methionine-sulfoxide reductase heme-binding subunit MsrQ.